Consider the following 145-residue polypeptide: Histone H3-like centromeric protein A (145 aa).

Positions 1–19 are enriched in basic residues; it reads MPRHTSAHKRKPSTPRRRS. The interval 1–54 is disordered; it reads MPRHTSAHKRKPSTPRRRSPPASLPPPAGSRTRRHSGPSGSSPRKKHKFRPGTR. The residue at position 19 (S19) is a Phosphoserine. An H3-like region spans residues 51–145; sequence PGTRALMEIR…ARRIRGVEHM (95 aa).

It belongs to the histone H3 family. In terms of assembly, component of centromeric nucleosomes, where DNA is wrapped around a histone octamer core. The octamer contains two molecules each of H2A, H2B, CENPA and H4 assembled in one CENPA-H4 heterotetramer and two H2A-H2B heterodimers. CENPA modulates the DNA-binding characteristics of nucleosomes so that protruding DNA ends have higher flexibility than in nucleosomes containing conventional histone H3.

It localises to the nucleus. Its subcellular location is the chromosome. The protein resides in the centromere. Histone H3-like nucleosomal protein that is specifically found in centromeric nucleosomes. Replaces conventional H3 in the nucleosome core of centromeric chromatin that serves as an assembly site for the inner kinetochore. The presence of CENPA subtly modifies the nucleosome structure and the way DNA is wrapped around the nucleosome and gives rise to protruding DNA ends that are less well-ordered and rigid compared to nucleosomes containing histone H3. May serve as an epigenetic mark that propagates centromere identity through replication and cell division. Required for recruitment and assembly of kinetochore proteins, and as a consequence required for progress through mitosis, chromosome segregation and cytokinesis. In Danio rerio (Zebrafish), this protein is Histone H3-like centromeric protein A (cenpa).